Consider the following 155-residue polypeptide: Molybdopterin synthase catalytic subunit (155 aa).

Residues 109-110, K125, and 132-134 each bind substrate; these read HR and KKE.

Belongs to the MoaE family. MOCS2B subfamily. In terms of assembly, heterotetramer; composed of 2 small (MOCS2A) and 2 large (MOCS2B) subunits.

The protein localises to the cytoplasm. The protein resides in the cytosol. The catalysed reaction is 2 [molybdopterin-synthase sulfur-carrier protein]-C-terminal-Gly-aminoethanethioate + cyclic pyranopterin phosphate + H2O = molybdopterin + 2 [molybdopterin-synthase sulfur-carrier protein]-C-terminal Gly-Gly + 2 H(+). It participates in cofactor biosynthesis; molybdopterin biosynthesis. Its function is as follows. Catalytic subunit of the molybdopterin synthase complex, a complex that catalyzes the conversion of precursor Z into molybdopterin. Acts by mediating the incorporation of 2 sulfur atoms from thiocarboxylated MOCS2A into precursor Z to generate a dithiolene group. The polypeptide is Molybdopterin synthase catalytic subunit (Taeniopygia guttata (Zebra finch)).